The primary structure comprises 160 residues: Oligoribonuclease (160 aa).

Residues 8-158 (LIWIDLEMTG…YNKLKKKTLI (151 aa)) form the Exonuclease domain. The active site involves Tyr129.

Belongs to the oligoribonuclease family.

It is found in the cytoplasm. Its function is as follows. 3'-to-5' exoribonuclease specific for small oligoribonucleotides. This Buchnera aphidicola subsp. Baizongia pistaciae (strain Bp) protein is Oligoribonuclease (orn).